Reading from the N-terminus, the 104-residue chain is Protein SMALL AUXIN UP-REGULATED RNA 9 (104 aa).

It belongs to the ARG7 family. In terms of assembly, interacts with and inhibits PP2C-D subfamily of type 2C phosphatases such as PP2C67/PP2C-D1. Expressed in etiolated hypocotyls, petioles, leaves and flowers.

The protein localises to the cell membrane. Provide a mechanistic link between auxin and plasma membrane H(+)-ATPases (PM H(+)-ATPases, e.g. AHA1 and AHA2), and triggers PM H(+)-ATPases activity by promoting phosphorylation of their C-terminal autoinhibitory domain as a result of PP2C-D subfamily of type 2C phosphatases inhibition, thus leading to the acidification of the apoplast and the facilitation of solutes and water uptake to drive cell expansion. Triggers plant growth probably by promoting cell elongation. Regulates branch angles and bending. Probably involved in light intensity mediated root development. The polypeptide is Protein SMALL AUXIN UP-REGULATED RNA 9 (Arabidopsis thaliana (Mouse-ear cress)).